A 746-amino-acid polypeptide reads, in one-letter code: Zinc finger protein 366 (746 aa).

A disordered region spans residues 1–64 (MQKAMKMVKD…FRYEPSPGDL (64 aa)). C2H2-type zinc fingers lie at residues 250-272 (WQCP…ILGH), 278-300 (HACS…MLTH), 306-328 (HKCQ…MMQH), 334-356 (HNCR…EAKH), 362-384 (NICV…LTTH), 390-412 (YNCS…MMKH), 418-440 (YICS…SLTH), 446-468 (HKCG…VLIH), 474-496 (YQCH…MIVH), 502-524 (FKCK…LHLH), and 530-553 (FKCL…KVKH). The interaction with NRIP1 stretch occupies residues 452-746 (GREFTLLANM…MEKQAVLLGI (295 aa)). Residues 587–591 (PFDLS) carry the PXDLS motif. The disordered stretch occupies residues 587–689 (PFDLSQKRSA…DHEGSDIDCE (103 aa)). Positions 613–627 (CQEEEEEAGEEDNCY) are enriched in acidic residues. Positions 675–689 (EDRSEDHEGSDIDCE) are enriched in basic and acidic residues.

In terms of assembly, interacts with ESR1 and NRIP1. Interacts (via PXDLS motif) with CTBP1. Expressed in immature and mature dendritic cells (DCs).

Its subcellular location is the nucleus. Its function is as follows. Has transcriptional repression activity. Acts as a corepressor of ESR1; the function seems to involve CTBP1 and histone deacetylases. This Mus musculus (Mouse) protein is Zinc finger protein 366.